Consider the following 293-residue polypeptide: Diaminopimelate epimerase (293 aa).

Asparagine 17, glutamine 47, and asparagine 67 together coordinate substrate. Cysteine 76 acts as the Proton donor in catalysis. Substrate-binding positions include 77–78, asparagine 164, asparagine 197, and 215–216; these read GN and ER. The active-site Proton acceptor is cysteine 224. 225 to 226 serves as a coordination point for substrate; it reads GS.

The protein belongs to the diaminopimelate epimerase family. Homodimer.

The protein localises to the cytoplasm. The enzyme catalyses (2S,6S)-2,6-diaminopimelate = meso-2,6-diaminopimelate. It participates in amino-acid biosynthesis; L-lysine biosynthesis via DAP pathway; DL-2,6-diaminopimelate from LL-2,6-diaminopimelate: step 1/1. Functionally, catalyzes the stereoinversion of LL-2,6-diaminopimelate (L,L-DAP) to meso-diaminopimelate (meso-DAP), a precursor of L-lysine and an essential component of the bacterial peptidoglycan. In Rhodopseudomonas palustris (strain HaA2), this protein is Diaminopimelate epimerase.